We begin with the raw amino-acid sequence, 546 residues long: Hexose oxidase (546 aa).

One can recognise an FAD-binding PCMH-type domain in the interval 40–222 (IGTNIDFVYV…TKYYFKDLPM (183 aa)). Residues 79-138 (HCYEDFVFDECVKAIINVTGLVESGYDDDRGYFVSSGDTNWGSFKTLFRDHGRVLPGGSC) constitute a cross-link (6-(S-cysteinyl)-8alpha-(pros-histidyl)-FAD (His-Cys)). Residues Asn-95 and Asn-358 are each glycosylated (N-linked (GlcNAc...) asparagine).

Belongs to the oxygen-dependent FAD-linked oxidoreductase family. Homodimer. The cofactor is FAD. Cleaved into 40 kDa and 29 kDa cleavage products, but the 2 polypeptide chains do not separate and seem to be physically linked together. In terms of processing, the FAD cofactor is bound via a bicovalent 6-S-cysteinyl, 8alpha-N1-histidyl FAD linkage.

It catalyses the reaction beta-D-glucose + O2 = D-glucono-1,5-lactone + H2O2. The enzyme catalyses D-galactose + O2 = D-galactono-1,5-lactone + H2O2. The catalysed reaction is D-maltose + O2 = D-maltobiono-1,5-lactone + H2O2. It carries out the reaction D-cellobiose + O2 = D-cellobiono-1,5-lactone + H2O2. It catalyses the reaction beta-lactose + O2 = lactobiono-1,5-lactone + H2O2. Functionally, catalyzes the selective oxidation of C1 hydroxyl moieties on mono- and disaccharides with concomitant reduction of molecular oxygen to hydrogen peroxide. This results in the formation of the corresponding lactones, which typically undergo spontaneous hydrolysis. Hexose oxidase is able to oxidize a variety of substrates including D-glucose, D-galactose, maltose, cellobiose, and lactose. This is Hexose oxidase (HOX) from Chondrus crispus (Carrageen Irish moss).